The primary structure comprises 206 residues: Pyrrolidone-carboxylate peptidase (206 aa).

Active-site residues include Glu-76, Cys-139, and His-163.

It belongs to the peptidase C15 family. As to quaternary structure, homotetramer.

Its subcellular location is the cytoplasm. It carries out the reaction Release of an N-terminal pyroglutamyl group from a polypeptide, the second amino acid generally not being Pro.. In terms of biological role, removes 5-oxoproline from various penultimate amino acid residues except L-proline. The chain is Pyrrolidone-carboxylate peptidase (pcp) from Pyrococcus horikoshii (strain ATCC 700860 / DSM 12428 / JCM 9974 / NBRC 100139 / OT-3).